Consider the following 530-residue polypeptide: UPF0422 protein lpg2959 (530 aa).

The signal sequence occupies residues 1 to 19; the sequence is MKFKKIILALACLSSPLYA. Positions 20-66 form a coiled coil; sequence DQDQQLKSEIQRLQHQAEDLQAQLNRLQKQLANHKSSQQKHEQQAAA. Positions 50-81 are disordered; the sequence is LANHKSSQQKHEQQAAAKPAEPQSKPTVKSGA. A compositionally biased stretch (low complexity) spans 63–75; it reads QAAAKPAEPQSKP.

It belongs to the UPF0422 family.

In Legionella pneumophila subsp. pneumophila (strain Philadelphia 1 / ATCC 33152 / DSM 7513), this protein is UPF0422 protein lpg2959.